The following is a 145-amino-acid chain: Transmembrane protein 216 (145 aa).

The next 4 helical transmembrane spans lie at isoleucine 22–phenylalanine 42, leucine 56–phenylalanine 76, leucine 89–leucine 109, and glycine 122–phenylalanine 142.

In terms of assembly, part of the tectonic-like complex (also named B9 complex). Interacts with TMEM107.

The protein localises to the membrane. The protein resides in the cytoplasm. It localises to the cytoskeleton. Its subcellular location is the cilium basal body. In terms of biological role, part of the tectonic-like complex which is required for tissue-specific ciliogenesis and may regulate ciliary membrane composition. The protein is Transmembrane protein 216 (TMEM216) of Homo sapiens (Human).